Consider the following 465-residue polypeptide: MATAASAIEYSSVKSIAGPLLIVEGVEGAAYGEIVEVICPDGEKRMGQVLEAREGLAVVQVFEGTTGLSTKDTRVRFTGRTAKIGVSMEMLGRIFNGAGKPIDGGPEIVPEKELDINGYPLNPVSRKVPSDFIQTGISTIDGMNTLVRGQKLPIFSGSGLPHNQLAAQIARQAKVRGEGEKFAVVFAAMGITSEEANFFMEEFRKTGALERAVVFINLADDPAIERILTPRIALTVAEYLAYEKDMHVLVILTDMTNYCEALREISAARNEVPGRRGYPGYMYTDLATIYERAGRVKGRTGTITQIPILTMPDDDITHPIPDLTGYITEGQIVLSRELHRKGIYPPVDVLPSLSRLAGNGQGPGKTREDHKKVVNQAYAAYAEGRSLRDLVAVVGEEALTDRDRAYLKFADEFEDKFVRQGKDEDRSIEETLDLLWELLAILPEEELKRVDRELIEKYHPKYRKK.

It belongs to the ATPase alpha/beta chains family. In terms of assembly, the A-type ATPase is composed of subunits A(3), B(3), C, D, E(1 or 2), F, H(2), I and proteolipid K(x).

The protein localises to the cell membrane. Functionally, component of the A-type ATP synthase that produces ATP from ADP in the presence of a proton gradient across the membrane. The B chain is a regulatory subunit. The polypeptide is A-type ATP synthase subunit B (Methanocaldococcus jannaschii (strain ATCC 43067 / DSM 2661 / JAL-1 / JCM 10045 / NBRC 100440) (Methanococcus jannaschii)).